Here is a 109-residue protein sequence, read N- to C-terminus: Thiosulfate sulfurtransferase GlpE (109 aa).

One can recognise a Rhodanese domain in the interval Arg16–Glu104. The active-site Cysteine persulfide intermediate is the Cys64.

This sequence belongs to the GlpE family.

Its subcellular location is the cytoplasm. The catalysed reaction is thiosulfate + hydrogen cyanide = thiocyanate + sulfite + 2 H(+). The enzyme catalyses thiosulfate + [thioredoxin]-dithiol = [thioredoxin]-disulfide + hydrogen sulfide + sulfite + 2 H(+). In terms of biological role, transferase that catalyzes the transfer of sulfur from thiosulfate to thiophilic acceptors such as cyanide or dithiols. May function in a CysM-independent thiosulfate assimilation pathway by catalyzing the conversion of thiosulfate to sulfite, which can then be used for L-cysteine biosynthesis. The chain is Thiosulfate sulfurtransferase GlpE from Stutzerimonas stutzeri (strain A1501) (Pseudomonas stutzeri).